The sequence spans 467 residues: Tel2-interacting protein 2 (467 aa).

The stretch at 4-45 (YKELARRLHTLQSKNEKEALEKQIDFLDKLVVEVDSLVHEQD) forms a coiled coil.

Belongs to the TTI2 family. As to quaternary structure, component of the TTT complex composed of tel2, tti1 and tti2. Interacts with tel2 and ttiI1. Component of the ASTRA complex composed of at least rvb1, rvb2, tra1, tel2, tti1 and tti2.

The protein localises to the nucleus. In terms of biological role, component of the tel2-tti1-tti2 (TTT) complex that stabilizes protein levels of the phosphatidylinositol 3-kinase-related protein kinase (PIKK) family proteins. The TTT complex is involved in the cellular resistance to DNA damage stresses, like ionizing radiation (IR), ultraviolet (UV) and mitomycin C (MMC). Component of the ASTRA complex involved in chromatin remodeling. The polypeptide is Tel2-interacting protein 2 (Schizosaccharomyces pombe (strain 972 / ATCC 24843) (Fission yeast)).